The sequence spans 123 residues: Holo-[acyl-carrier-protein] synthase (123 aa).

2 residues coordinate Mg(2+): D7 and E56.

This sequence belongs to the P-Pant transferase superfamily. AcpS family. The cofactor is Mg(2+).

Its subcellular location is the cytoplasm. The catalysed reaction is apo-[ACP] + CoA = holo-[ACP] + adenosine 3',5'-bisphosphate + H(+). Functionally, transfers the 4'-phosphopantetheine moiety from coenzyme A to a Ser of acyl-carrier-protein. The protein is Holo-[acyl-carrier-protein] synthase of Carboxydothermus hydrogenoformans (strain ATCC BAA-161 / DSM 6008 / Z-2901).